The chain runs to 207 residues: Outer-membrane lipoprotein carrier protein (207 aa).

The signal sequence occupies residues 1-21; it reads MRAIRMLLVSALTLGSVTAYA.

Belongs to the LolA family. In terms of assembly, monomer.

It is found in the periplasm. Functionally, participates in the translocation of lipoproteins from the inner membrane to the outer membrane. Only forms a complex with a lipoprotein if the residue after the N-terminal Cys is not an aspartate (The Asp acts as a targeting signal to indicate that the lipoprotein should stay in the inner membrane). The chain is Outer-membrane lipoprotein carrier protein from Pseudomonas putida (strain ATCC 47054 / DSM 6125 / CFBP 8728 / NCIMB 11950 / KT2440).